The following is a 28-amino-acid chain: Conotoxin Cl5.3 (28 aa).

It belongs to the conotoxin T superfamily. Contains 2 disulfide bonds that can be either 'C1-C3, C2-C4' or 'C1-C4, C2-C3', since these disulfide connectivities have been observed for conotoxins with cysteine framework V (for examples, see AC P0DQQ7 and AC P81755). As to expression, expressed by the venom duct.

The protein resides in the secreted. In Californiconus californicus (California cone), this protein is Conotoxin Cl5.3.